The sequence spans 118 residues: Large ribosomal subunit protein bL17 (118 aa).

Belongs to the bacterial ribosomal protein bL17 family. Part of the 50S ribosomal subunit. Contacts protein L32.

The sequence is that of Large ribosomal subunit protein bL17 from Gemmatimonas aurantiaca (strain DSM 14586 / JCM 11422 / NBRC 100505 / T-27).